A 142-amino-acid polypeptide reads, in one-letter code: MGKTHGMGAARKLKSHRRTQRWADKSYKKSHLGNEWKKPFAGSSHAKGIVLEKIGIEAKQPNSAIRKCARVQLIKNGKKIAAFVPNDGCLNYIEENDEVLIAGFGRKGHAVGDIPGVRFKVVKVSGVSLLALFKEKKEKPRS.

Residues 1-30 (MGKTHGMGAARKLKSHRRTQRWADKSYKKS) form a disordered region. Residues 11–20 (RKLKSHRRTQ) are compositionally biased toward basic residues. Over residues 21–30 (RWADKSYKKS) the composition is skewed to basic and acidic residues. Proline 61 bears the Hydroxyproline mark.

The protein belongs to the universal ribosomal protein uS12 family.

This chain is Small ribosomal subunit protein uS12 (RPS23), found in Euphorbia esula (Leafy spurge).